A 295-amino-acid chain; its full sequence is Movement protein (295 aa).

The tract at residues 256–295 (KKTNVKEESPTSDPQSGEVSSMTQSVPGAADTRIPKPRRR) is disordered. Polar residues predominate over residues 266 to 281 (TSDPQSGEVSSMTQSV).

This sequence belongs to the bromovirus movement protein family.

Its subcellular location is the host cell junction. It is found in the host plasmodesma. Its function is as follows. Transports viral genome to neighboring plant cells directly through plasmosdesmata, without any budding. The movement protein allows efficient cell to cell propagation, by bypassing the host cell wall barrier. Acts by forming a tubular structure at the host plasmodesmata, enlarging it enough to allow free passage of virion capsids. This Broad bean mottle virus protein is Movement protein.